The chain runs to 57 residues: Toxin GhoT (57 aa).

Helical transmembrane passes span I7–H27 and A37–F57.

The protein belongs to the GhoT/OrtT toxin family.

The protein resides in the cell inner membrane. In terms of biological role, toxic component of a type V toxin-antitoxin (TA) system. Causes membrane damage when induced by MqsR, slowing cell growth and leading to the formation of dormant persister cells; involved with GhoS, its antitoxin, in reducing cell growth during antibacterial stress. Its toxic effects are neutralized by GhoS, which digests ghoT transcripts in a sequence-specific manner. The polypeptide is Toxin GhoT (Escherichia coli O157:H7).